A 132-amino-acid polypeptide reads, in one-letter code: Small ribosomal subunit protein uS8 (132 aa).

The protein belongs to the universal ribosomal protein uS8 family. As to quaternary structure, part of the 30S ribosomal subunit. Contacts proteins S5 and S12.

Functionally, one of the primary rRNA binding proteins, it binds directly to 16S rRNA central domain where it helps coordinate assembly of the platform of the 30S subunit. The sequence is that of Small ribosomal subunit protein uS8 from Xanthomonas axonopodis pv. citri (strain 306).